The primary structure comprises 411 residues: Indian hedgehog protein (411 aa).

The N-terminal stretch at 1–27 is a signal peptide; sequence MSPARLRPRLHFCLVLLLLLVVPAAWG. Cys-28 carries N-palmitoyl cysteine lipidation. Residues Glu-94, Glu-95, Asp-100, Thr-130, Glu-131, Asp-134, and Asp-136 each contribute to the Ca(2+) site. Zn(2+) is bound by residues His-145, Asp-152, and His-187. The Cholesterol glycine ester moiety is linked to residue Gly-202. Asn-282 is a glycosylation site (N-linked (GlcNAc...) asparagine).

The protein belongs to the hedgehog family. In terms of assembly, multimer. As to quaternary structure, interacts with BOC and CDON. Interacts with PTCH1. Interacts with glypican GPC3. Post-translationally, cholesterylation is required for N-product targeting to lipid rafts and multimerization. The C-terminal domain displays an autoproteolysis activity and a cholesterol transferase activity. Both activities result in the cleavage of the full-length protein and covalent attachment of a cholesterol moiety to the C-terminal of the newly generated N-product. The N-product is the active species in both local and long-range signaling, whereas the C-product is degraded in the endoplasmic reticulum. In terms of processing, N-palmitoylation by HHAT of N-product is required for indian hedgehog protein N-product multimerization and full activity. Expressed in embryonic lung, and in adult kidney and liver.

The protein resides in the cell membrane. The protein localises to the endoplasmic reticulum membrane. It localises to the golgi apparatus membrane. It is found in the secreted. It catalyses the reaction glycyl-L-cysteinyl-[protein] + cholesterol + H(+) = [protein]-C-terminal glycyl cholesterol ester + N-terminal L-cysteinyl-[protein]. Plays a role in embryonic morphogenesis; it is involved in the regulation of endochondral skeleton formation, and the development of retinal pigment epithelium (RPE), photoreceptors and periocular tissues. In terms of biological role, the C-terminal part of the indian hedgehog protein precursor displays an autoproteolysis and a cholesterol transferase activity. Both activities result in the cleavage of the full-length protein into two parts followed by the covalent attachment of a cholesterol moiety to the C-terminal of the newly generated N-product. Both activities occur in the endoplasmic reticulum. Plays a role in hedgehog paracrine signaling. Associated with the very-low-density lipoprotein (VLDL) particles to function as a circulating morphogen for endothelial cell integrity maintenance. Its function is as follows. The dually lipidated indian hedgehog protein N-product is a morphogen which is essential for a variety of patterning events during development. Binds to the patched (PTCH1) receptor, which functions in association with smoothened (SMO), to activate the transcription of target genes. Plays a role in morphogenesis of the skeleton by coordinating growth and differentiation of the endochondral skeleton. Positively regulates PTHLH expression during endochondral bone formation preventing chondrocyte hypertrophy. In contrast, participates in normal chondrocyte proliferation in a PTHLH-independent pathway. The sequence is that of Indian hedgehog protein from Homo sapiens (Human).